A 355-amino-acid polypeptide reads, in one-letter code: Heterogeneous nuclear ribonucleoprotein D0 (355 aa).

The tract at residues 1 to 92 (MSEEQFGGDG…SPRHSEAATA (92 aa)) is disordered. Ser-2 bears the N-acetylserine mark. Low complexity-rich tracts occupy residues 11–20 (AAAAATAAVG) and 27–42 (EGAM…AAAG). Gly residues predominate over residues 43–58 (SGAGTGGGTASGGTEG). The segment covering 64-73 (EGAKIDASKN) has biased composition (basic and acidic residues). Residue Ser-71 is modified to Phosphoserine. Lys-72 is covalently cross-linked (Glycyl lysine isopeptide (Lys-Gly) (interchain with G-Cter in SUMO2)). Phosphoserine occurs at positions 80, 82, and 83. Phosphothreonine is present on Thr-91. RRM domains follow at residues 97 to 179 (WKMF…KTKE) and 182 to 261 (KKIF…MSKE). Lys-119 bears the N6-methyllysine mark. Residue Thr-127 is modified to Phosphothreonine. Lys-129 participates in a covalent cross-link: Glycyl lysine isopeptide (Lys-Gly) (interchain with G-Cter in SUMO2). Residue Lys-165 is modified to N6-acetyllysine. Ser-190 bears the Phosphoserine mark. The residue at position 193 (Thr-193) is a Phosphothreonine. Residue Lys-197 forms a Glycyl lysine isopeptide (Lys-Gly) (interchain with G-Cter in SUMO2) linkage. Residues Lys-243 and Lys-251 each carry the N6-acetyllysine modification. An Omega-N-methylarginine modification is found at Tyr-263. Ser-271 bears the Phosphoserine mark. Omega-N-methylarginine is present on Arg-272. An N6-acetyllysine modification is found at Gly-273. Residues Arg-278, Arg-280, and Arg-282 each carry the omega-N-methylarginine modification. N6-acetyllysine is present on Gln-292. Position 345 is an asymmetric dimethylarginine; alternate (Arg-345). At Arg-345 the chain carries Dimethylated arginine; alternate. Arg-345 bears the Omega-N-methylarginine; alternate mark.

As to quaternary structure, identified in a IGF2BP1-dependent mRNP granule complex containing untranslated mRNAs. Part of a complex associated with the FOS mCRD domain and consisting of PABPC1, PAIP1, CSDE1/UNR and SYNCRIP. Interacts with IGF2BP2. Interacts with GTPBP1. Interacts with EIF4G1; the interaction requires RNA. Interacts with EIF3B and RPS3. Arg-345 is dimethylated, probably to asymmetric dimethylarginine. In terms of processing, methylated by PRMT1, in an insulin-dependent manner. The PRMT1-mediated methylation regulates tyrosine phosphorylation.

It localises to the nucleus. It is found in the cytoplasm. Its function is as follows. Binds with high affinity to RNA molecules that contain AU-rich elements (AREs) found within the 3'-UTR of many proto-oncogenes and cytokine mRNAs. Also binds to double- and single-stranded DNA sequences in a specific manner and functions a transcription factor. Each of the RNA-binding domains specifically can bind solely to a single-stranded non-monotonous 5'-UUAG-3' sequence and also weaker to the single-stranded 5'-TTAGGG-3' telomeric DNA repeat. Binds RNA oligonucleotides with 5'-UUAGGG-3' repeats more tightly than the telomeric single-stranded DNA 5'-TTAGGG-3' repeats. Binding of RRM1 to DNA inhibits the formation of DNA quadruplex structure which may play a role in telomere elongation. May be involved in translationally coupled mRNA turnover. Implicated with other RNA-binding proteins in the cytoplasmic deadenylation/translational and decay interplay of the FOS mRNA mediated by the major coding-region determinant of instability (mCRD) domain. May play a role in the regulation of the rhythmic expression of circadian clock core genes. Directly binds to the 3'UTR of CRY1 mRNA and induces CRY1 rhythmic translation. May also be involved in the regulation of PER2 translation. The protein is Heterogeneous nuclear ribonucleoprotein D0 (HNRNPD) of Homo sapiens (Human).